The primary structure comprises 198 residues: Probable GTP-binding protein EngB (198 aa).

The EngB-type G domain maps to 22-195; sequence GHPEIAFLGR…WSWLEQTAGL (174 aa). GTP is bound by residues 30–37, 57–61, 75–78, 142–145, and 174–176; these read GRSNVGKS, GKTQT, DVPG, TKID, and FSA. Mg(2+) contacts are provided by serine 37 and threonine 59.

Belongs to the TRAFAC class TrmE-Era-EngA-EngB-Septin-like GTPase superfamily. EngB GTPase family. Mg(2+) is required as a cofactor.

Its function is as follows. Necessary for normal cell division and for the maintenance of normal septation. This is Probable GTP-binding protein EngB from Lacticaseibacillus paracasei (strain ATCC 334 / BCRC 17002 / CCUG 31169 / CIP 107868 / KCTC 3260 / NRRL B-441) (Lactobacillus paracasei).